The chain runs to 432 residues: Adenylosuccinate synthetase (432 aa).

GTP is bound by residues 13–19 (GDEGKGK) and 41–43 (GHT). Residue D14 is the Proton acceptor of the active site. Residues D14 and G41 each coordinate Mg(2+). Residues 14–17 (DEGK), 39–42 (NAGH), T130, R144, Q225, T240, and R304 contribute to the IMP site. The active-site Proton donor is the H42. Position 300 to 306 (300 to 306 (AVTGRPR)) interacts with substrate. GTP is bound by residues R306, 332–334 (KLD), and 415–417 (STG).

The protein belongs to the adenylosuccinate synthetase family. In terms of assembly, homodimer. It depends on Mg(2+) as a cofactor.

Its subcellular location is the cytoplasm. The enzyme catalyses IMP + L-aspartate + GTP = N(6)-(1,2-dicarboxyethyl)-AMP + GDP + phosphate + 2 H(+). The protein operates within purine metabolism; AMP biosynthesis via de novo pathway; AMP from IMP: step 1/2. In terms of biological role, plays an important role in the de novo pathway of purine nucleotide biosynthesis. Catalyzes the first committed step in the biosynthesis of AMP from IMP. The sequence is that of Adenylosuccinate synthetase from Histophilus somni (strain 2336) (Haemophilus somnus).